A 432-amino-acid polypeptide reads, in one-letter code: Adenylosuccinate synthetase (432 aa).

Residues 13-19 and 41-43 each bind GTP; these read GDEGKGK and GHT. Aspartate 14 (proton acceptor) is an active-site residue. 2 residues coordinate Mg(2+): aspartate 14 and glycine 41. Residues 14 to 17, 39 to 42, threonine 130, arginine 144, glutamine 225, threonine 240, and arginine 304 contribute to the IMP site; these read DEGK and NAGH. The active-site Proton donor is histidine 42. 300 to 306 serves as a coordination point for substrate; it reads ATTGRPR. Residues arginine 306, 332–334, and 415–417 contribute to the GTP site; these read KLD and STG.

It belongs to the adenylosuccinate synthetase family. Homodimer. Requires Mg(2+) as cofactor.

Its subcellular location is the cytoplasm. It catalyses the reaction IMP + L-aspartate + GTP = N(6)-(1,2-dicarboxyethyl)-AMP + GDP + phosphate + 2 H(+). It functions in the pathway purine metabolism; AMP biosynthesis via de novo pathway; AMP from IMP: step 1/2. In terms of biological role, plays an important role in the de novo pathway of purine nucleotide biosynthesis. Catalyzes the first committed step in the biosynthesis of AMP from IMP. This chain is Adenylosuccinate synthetase, found in Hahella chejuensis (strain KCTC 2396).